The following is a 245-amino-acid chain: Phosphoadenosine 5'-phosphosulfate reductase (245 aa).

Cys-239 serves as the catalytic Nucleophile; cysteine thiosulfonate intermediate.

It belongs to the PAPS reductase family. CysH subfamily.

The protein localises to the cytoplasm. The enzyme catalyses [thioredoxin]-disulfide + sulfite + adenosine 3',5'-bisphosphate + 2 H(+) = [thioredoxin]-dithiol + 3'-phosphoadenylyl sulfate. It functions in the pathway sulfur metabolism; hydrogen sulfide biosynthesis; sulfite from sulfate: step 3/3. Catalyzes the formation of sulfite from phosphoadenosine 5'-phosphosulfate (PAPS) using thioredoxin as an electron donor. The sequence is that of Phosphoadenosine 5'-phosphosulfate reductase from Shewanella oneidensis (strain ATCC 700550 / JCM 31522 / CIP 106686 / LMG 19005 / NCIMB 14063 / MR-1).